Consider the following 91-residue polypeptide: Defensin-like protein 82 (91 aa).

Residues 1–27 (MAIKKFSSLLLPLLMVLALVVLPIISG) form the signal peptide. Cystine bridges form between C34–C72, C41–C62, C47–C70, and C51–C71.

This sequence belongs to the DEFL family.

Its subcellular location is the secreted. The chain is Defensin-like protein 82 from Arabidopsis thaliana (Mouse-ear cress).